Reading from the N-terminus, the 271-residue chain is Short chain dehydrogenase asqE (271 aa).

The NADP(+) site is built by Ile-22, Asp-70, and Asn-99. Residues Ser-152 and Ser-153 each act as proton donor in the active site. Positions 167, 171, and 203 each coordinate NADP(+). Tyr-167 serves as the catalytic Proton acceptor. The active-site Lowers pKa of active site Tyr is Lys-171.

The protein belongs to the short-chain dehydrogenases/reductases (SDR) family.

It carries out the reaction a primary alcohol + NAD(+) = an aldehyde + NADH + H(+). The enzyme catalyses a secondary alcohol + NAD(+) = a ketone + NADH + H(+). Its pathway is secondary metabolite biosynthesis. It participates in alkaloid biosynthesis. It functions in the pathway mycotoxin biosynthesis. Functionally, short chain dehydrogenase; part of the gene cluster that mediates the biosynthesis of the aspoquinolone mycotoxins. The role of asqE within the aspoquinolone pathway has still to be determined. The first step of the pathway is catalyzed by the nonribosomal peptide synthetase asqK that condenses anthranilic acid and O-methyl-L-tyrosine to produce 4'-methoxycyclopeptin. 4'-methoxycyclopeptin is then converted to 4'-methoxydehydrocyclopeptin by the ketoglutarate-dependent dioxygenase asqJ. AsqJ also converts its first product 4'-methoxydehydrocyclopeptin to 4'-methoxycyclopenin. The following conversion of 4'-methoxycyclopenin into 4'-methoxyviridicatin is catalyzed by the cyclopenase asqI. 4'-methoxyviridicatin is the precursor of quinolone natural products, and is further converted to quinolinone B. The prenyltransferase asqH1 then catalyzes the canonical Friedel-Crafts alkylation of quinolinone B with dimethylallyl cation to yield dimethylallyl quinolone, which is subjected to FAD-dependent dehydrogenation by the FAD-linked oxidoreductase asqF to yield conjugated aryl diene. The delta(3') double bond then serves as the site of the second alkylation with DMAPP catalyzed by the prenyltransferase asqH2 to yield a carbenium ion intermediate, which can be attacked by H(2)O to yield a styrenyl quinolone containing a C3'-hydroxyprenyl chain. The FAD-dependent monooxygenase asqG performs epoxidation of the terminal C7'-C8' olefin. Finally, after dehydratation of the epoxide at C3 by asqC, the quinolone epoxide rearrangement protein asqO catalyzes an enzymatic 3-exo-tet cyclization to yield the cyclopropyl-THF ring system in aspoquinolone. The chain is Short chain dehydrogenase asqE from Emericella nidulans (strain FGSC A4 / ATCC 38163 / CBS 112.46 / NRRL 194 / M139) (Aspergillus nidulans).